Reading from the N-terminus, the 238-residue chain is Ribonuclease PH (238 aa).

Phosphate-binding positions include Arg-86 and 124–126; that span reads GTR.

Belongs to the RNase PH family. In terms of assembly, homohexameric ring arranged as a trimer of dimers.

It catalyses the reaction tRNA(n+1) + phosphate = tRNA(n) + a ribonucleoside 5'-diphosphate. Functionally, phosphorolytic 3'-5' exoribonuclease that plays an important role in tRNA 3'-end maturation. Removes nucleotide residues following the 3'-CCA terminus of tRNAs; can also add nucleotides to the ends of RNA molecules by using nucleoside diphosphates as substrates, but this may not be physiologically important. Probably plays a role in initiation of 16S rRNA degradation (leading to ribosome degradation) during starvation. The sequence is that of Ribonuclease PH from Vibrio cholerae serotype O1 (strain ATCC 39315 / El Tor Inaba N16961).